Consider the following 209-residue polypeptide: Phosphopantothenoylcysteine decarboxylase (209 aa).

FMN contacts are provided by residues 28–30 (GSV) and 53–55 (TKS). His90 functions as the Proton donor in the catalytic mechanism. FMN is bound by residues 106–109 (SANT) and Ala140. N-[(R)-4-phosphopantothenoyl]-L-cysteine contacts are provided by Asn142, Arg172, and Ala174. Cys175 serves as the catalytic Proton donor. Met183 lines the N-[(R)-4-phosphopantothenoyl]-L-cysteine pocket.

Belongs to the HFCD (homooligomeric flavin containing Cys decarboxylase) superfamily. In terms of assembly, homotrimer. Requires FMN as cofactor. Expressed in roots, shoots, leaves, flowers, developing siliques and seeds with highest expression in seed embryos and phloem.

The catalysed reaction is N-[(R)-4-phosphopantothenoyl]-L-cysteine + H(+) = (R)-4'-phosphopantetheine + CO2. Its pathway is cofactor biosynthesis; coenzyme A biosynthesis; CoA from (R)-pantothenate: step 3/5. Functionally, involved in plant growth, and salt and osmotic tolerance. Catalyzes the decarboxylation of 4'-phosphopantothenoylcysteine to 4'-phosphopantetheine, a key step in coenzyme A biosynthesis. The enzyme is also able to decarboxylate pantothenoylcysteine to pantothenoylcysteamine. This Arabidopsis thaliana (Mouse-ear cress) protein is Phosphopantothenoylcysteine decarboxylase.